Here is a 311-residue protein sequence, read N- to C-terminus: Methionyl-tRNA formyltransferase (311 aa).

108 to 111 (SILP) serves as a coordination point for (6S)-5,6,7,8-tetrahydrofolate.

Belongs to the Fmt family.

The catalysed reaction is L-methionyl-tRNA(fMet) + (6R)-10-formyltetrahydrofolate = N-formyl-L-methionyl-tRNA(fMet) + (6S)-5,6,7,8-tetrahydrofolate + H(+). Attaches a formyl group to the free amino group of methionyl-tRNA(fMet). The formyl group appears to play a dual role in the initiator identity of N-formylmethionyl-tRNA by promoting its recognition by IF2 and preventing the misappropriation of this tRNA by the elongation apparatus. This chain is Methionyl-tRNA formyltransferase, found in Sorangium cellulosum (strain So ce56) (Polyangium cellulosum (strain So ce56)).